Reading from the N-terminus, the 620-residue chain is Acetylcholinesterase 1 (620 aa).

An N-terminal signal peptide occupies residues 1–31 (MRYSLLFFIFLPCVITAVDLIHLHDGSPLFG). N-linked (GlcNAc...) asparagine glycosylation occurs at Asn-74. An intrachain disulfide couples Cys-82 to Cys-109. The active-site Acyl-ester intermediate is Ser-216. A disulfide bridge connects residues Cys-270 and Cys-286. N-linked (GlcNAc...) asparagine glycosylation occurs at Asn-272. Catalysis depends on charge relay system residues Glu-346 and His-468. A disulfide bond links Cys-430 and Cys-558. N-linked (GlcNAc...) asparagine glycans are attached at residues Asn-486 and Asn-536.

This sequence belongs to the type-B carboxylesterase/lipase family. As to quaternary structure, oligomer composed of disulfide-linked homodimers.

The protein localises to the synapse. Its subcellular location is the secreted. It is found in the cell membrane. The enzyme catalyses acetylcholine + H2O = choline + acetate + H(+). Rapidly hydrolyzes choline released into the synapse. In Caenorhabditis briggsae, this protein is Acetylcholinesterase 1 (ace-1).